A 141-amino-acid polypeptide reads, in one-letter code: HTH-type transcriptional regulator MntR (141 aa).

In terms of domain architecture, HTH dtxR-type spans 1-63 (MPTPSMEDYI…YEKYRGLVLT (63 aa)). D8, E11, H77, E99, E102, and H103 together coordinate Mn(2+).

It belongs to the DtxR/MntR family. In terms of assembly, homodimer.

The protein resides in the cytoplasm. DNA binding is strongly activated by Mn(2+). Its function is as follows. Central regulator of manganese homeostasis. In Geobacillus kaustophilus (strain HTA426), this protein is HTH-type transcriptional regulator MntR.